A 407-amino-acid chain; its full sequence is MMDGTKGFEDALTGEQKIRNFNINFGPQHPAAHGVLRLVLELDGEIVERCDPHIGLLHRGTEKLMESRTYLQNLPYFDRLDYVAPMNQEHAWCLAIEKLTGVEVPRRASLIRVLFCEIGRILNHILNITTQAMDVGALTPPLWGFEEREKLMVFYERASGARLHAAYFRPGGVHQDLPPALIDDIETWAHEFPRVIDDIDGLLTENRIFKQRNADIGVVTEEDILEYGFSGVMVRGSGLAWDLRRAQPYERYDEFDFQIPIGKNGDCYDRYLVRMEEMRQSLSIILQAIAKLRAPEGQGDVLARGKITPPSRSDMKTSMESLIHHFKLYTEGFHVPAGEVYACVEAPKGEFGVYLVADGTNKPYRAKIRAPGFLHLQAMDHMSRGHQLADVAAIIGTMDVVFGEIDR.

Belongs to the complex I 49 kDa subunit family. In terms of assembly, NDH-1 is composed of 14 different subunits. Subunits NuoB, C, D, E, F, and G constitute the peripheral sector of the complex.

The protein localises to the cell inner membrane. The catalysed reaction is a quinone + NADH + 5 H(+)(in) = a quinol + NAD(+) + 4 H(+)(out). Functionally, NDH-1 shuttles electrons from NADH, via FMN and iron-sulfur (Fe-S) centers, to quinones in the respiratory chain. The immediate electron acceptor for the enzyme in this species is believed to be ubiquinone. Couples the redox reaction to proton translocation (for every two electrons transferred, four hydrogen ions are translocated across the cytoplasmic membrane), and thus conserves the redox energy in a proton gradient. In Roseobacter denitrificans (strain ATCC 33942 / OCh 114) (Erythrobacter sp. (strain OCh 114)), this protein is NADH-quinone oxidoreductase subunit D.